We begin with the raw amino-acid sequence, 535 residues long: Phosphoenolpyruvate carboxykinase (ATP) (535 aa).

The substrate site is built by R59, Y201, and K207. Residues K207, H226, and G243–T251 each bind ATP. Residues K207 and H226 each coordinate Mn(2+). D264 lines the Mn(2+) pocket. Residues E292, R328, R444–I445, and T450 contribute to the ATP site. R328 contacts substrate.

The protein belongs to the phosphoenolpyruvate carboxykinase (ATP) family. It depends on Mn(2+) as a cofactor.

Its subcellular location is the cytoplasm. It catalyses the reaction oxaloacetate + ATP = phosphoenolpyruvate + ADP + CO2. Its pathway is carbohydrate biosynthesis; gluconeogenesis. Functionally, involved in the gluconeogenesis. Catalyzes the conversion of oxaloacetate (OAA) to phosphoenolpyruvate (PEP) through direct phosphoryl transfer between the nucleoside triphosphate and OAA. This is Phosphoenolpyruvate carboxykinase (ATP) from Porphyromonas gingivalis (strain ATCC 33277 / DSM 20709 / CIP 103683 / JCM 12257 / NCTC 11834 / 2561).